A 352-amino-acid polypeptide reads, in one-letter code: 4-hydroxy-2-oxovalerate aldolase (352 aa).

Positions valine 13 to alanine 265 constitute a Pyruvate carboxyltransferase domain. Arginine 21–aspartate 22 is a binding site for substrate. Aspartate 22 provides a ligand contact to Mn(2+). Histidine 25 (proton acceptor) is an active-site residue. Residues serine 175 and histidine 204 each contribute to the substrate site. Histidine 204 and histidine 206 together coordinate Mn(2+). Position 295 (tyrosine 295) interacts with substrate.

The protein belongs to the 4-hydroxy-2-oxovalerate aldolase family.

It carries out the reaction (S)-4-hydroxy-2-oxopentanoate = acetaldehyde + pyruvate. In Mycobacterium avium (strain 104), this protein is 4-hydroxy-2-oxovalerate aldolase.